We begin with the raw amino-acid sequence, 186 residues long: Periplasmic nitrate reductase, electron transfer subunit (186 aa).

The N-terminal stretch at 1–20 (MKTSKLNFLTLVASTGLALA) is a signal peptide. Heme c is bound by residues H87, C102, C105, H106, H123, C144, C147, and H148.

It belongs to the NapB family. As to quaternary structure, component of the periplasmic nitrate reductase NapAB complex composed of NapA and NapB. In terms of processing, binds 2 heme C groups per subunit.

It is found in the periplasm. Electron transfer subunit of the periplasmic nitrate reductase complex NapAB. Transfers electrons to NapA subunit, thus allowing electron flow between membrane and periplasm. Essential for periplasmic nitrate reduction with nitrate as the terminal electron acceptor. The protein is Periplasmic nitrate reductase, electron transfer subunit of Wolinella succinogenes (strain ATCC 29543 / DSM 1740 / CCUG 13145 / JCM 31913 / LMG 7466 / NCTC 11488 / FDC 602W) (Vibrio succinogenes).